A 311-amino-acid chain; its full sequence is Porphobilinogen deaminase (311 aa).

Cys-241 is subject to S-(dipyrrolylmethanemethyl)cysteine.

It belongs to the HMBS family. In terms of assembly, monomer. The cofactor is dipyrromethane.

It catalyses the reaction 4 porphobilinogen + H2O = hydroxymethylbilane + 4 NH4(+). It functions in the pathway porphyrin-containing compound metabolism; protoporphyrin-IX biosynthesis; coproporphyrinogen-III from 5-aminolevulinate: step 2/4. In terms of biological role, tetrapolymerization of the monopyrrole PBG into the hydroxymethylbilane pre-uroporphyrinogen in several discrete steps. The protein is Porphobilinogen deaminase of Carboxydothermus hydrogenoformans (strain ATCC BAA-161 / DSM 6008 / Z-2901).